Consider the following 600-residue polypeptide: Proline--tRNA ligase (600 aa).

Belongs to the class-II aminoacyl-tRNA synthetase family. ProS type 1 subfamily. In terms of assembly, homodimer.

The protein localises to the cytoplasm. It carries out the reaction tRNA(Pro) + L-proline + ATP = L-prolyl-tRNA(Pro) + AMP + diphosphate. Functionally, catalyzes the attachment of proline to tRNA(Pro) in a two-step reaction: proline is first activated by ATP to form Pro-AMP and then transferred to the acceptor end of tRNA(Pro). As ProRS can inadvertently accommodate and process non-cognate amino acids such as alanine and cysteine, to avoid such errors it has two additional distinct editing activities against alanine. One activity is designated as 'pretransfer' editing and involves the tRNA(Pro)-independent hydrolysis of activated Ala-AMP. The other activity is designated 'posttransfer' editing and involves deacylation of mischarged Ala-tRNA(Pro). The misacylated Cys-tRNA(Pro) is not edited by ProRS. The polypeptide is Proline--tRNA ligase (Prochlorococcus marinus (strain MIT 9312)).